A 664-amino-acid chain; its full sequence is Protein-arginine deiminase type-3 (664 aa).

The protein belongs to the protein arginine deiminase family. Ca(2+) is required as a cofactor. As to expression, epidermis and hair follicles.

The protein resides in the cytoplasm. The enzyme catalyses L-arginyl-[protein] + H2O = L-citrullyl-[protein] + NH4(+). Catalyzes the deimination of arginine residues of proteins. This Mus musculus (Mouse) protein is Protein-arginine deiminase type-3 (Padi3).